The following is a 464-amino-acid chain: ATP synthase subunit beta (464 aa).

Residue 151–158 participates in ATP binding; it reads GGAGVGKT.

The protein belongs to the ATPase alpha/beta chains family. In terms of assembly, F-type ATPases have 2 components, CF(1) - the catalytic core - and CF(0) - the membrane proton channel. CF(1) has five subunits: alpha(3), beta(3), gamma(1), delta(1), epsilon(1). CF(0) has three main subunits: a(1), b(2) and c(9-12). The alpha and beta chains form an alternating ring which encloses part of the gamma chain. CF(1) is attached to CF(0) by a central stalk formed by the gamma and epsilon chains, while a peripheral stalk is formed by the delta and b chains.

It localises to the cell membrane. The enzyme catalyses ATP + H2O + 4 H(+)(in) = ADP + phosphate + 5 H(+)(out). Produces ATP from ADP in the presence of a proton gradient across the membrane. The catalytic sites are hosted primarily by the beta subunits. The polypeptide is ATP synthase subunit beta (Clostridium kluyveri (strain ATCC 8527 / DSM 555 / NBRC 12016 / NCIMB 10680 / K1)).